The primary structure comprises 409 residues: Sprouty-related, EVH1 domain-containing protein 2 (409 aa).

The WH1 domain maps to 5–121 (APPEDDSYIV…RGVRKAIEDL (117 aa)). A disordered region spans residues 121–170 (LTEGSTTSSSTIHNEAELGDDDVFATSTDSSSNSSQKREPPVRTIASPLP). Positions 123–133 (EGSTTSSSTIH) are enriched in polar residues. The span at 146 to 155 (TSTDSSSNSS) shows a compositional bias: low complexity. One can recognise a KBD domain in the interval 199–253 (PHRHVSFPDDDDEIVRINPRERNWLTGYEDYRQAPIHRKYPDTESIDSYVRFAKS). Residues 299–407 (RCIYCRDMFN…CGCCGGKHKA (109 aa)) form the SPR domain.

The protein localises to the cell membrane. It is found in the cytoplasmic vesicle. The protein resides in the secretory vesicle membrane. It localises to the cytoplasm. Its function is as follows. Negatively regulates Ras signaling pathways and downstream activation of MAP kinases. The chain is Sprouty-related, EVH1 domain-containing protein 2 (spred2) from Xenopus tropicalis (Western clawed frog).